Consider the following 573-residue polypeptide: Sulfite reductase [NADPH] hemoprotein beta-component (573 aa).

Cys438, Cys444, Cys483, and Cys487 together coordinate [4Fe-4S] cluster. Cys487 is a siroheme binding site.

The protein belongs to the nitrite and sulfite reductase 4Fe-4S domain family. Alpha(8)-beta(8). The alpha component is a flavoprotein, the beta component is a hemoprotein. Siroheme is required as a cofactor. It depends on [4Fe-4S] cluster as a cofactor.

The enzyme catalyses hydrogen sulfide + 3 NADP(+) + 3 H2O = sulfite + 3 NADPH + 4 H(+). It participates in sulfur metabolism; hydrogen sulfide biosynthesis; hydrogen sulfide from sulfite (NADPH route): step 1/1. In terms of biological role, component of the sulfite reductase complex that catalyzes the 6-electron reduction of sulfite to sulfide. This is one of several activities required for the biosynthesis of L-cysteine from sulfate. This Nitrosomonas eutropha (strain DSM 101675 / C91 / Nm57) protein is Sulfite reductase [NADPH] hemoprotein beta-component.